The following is a 484-amino-acid chain: Cobyric acid synthase (484 aa).

In terms of domain architecture, GATase cobBQ-type spans 246–437 (ALRVVVPALP…VHGLFDTPAA (192 aa)). The active-site Nucleophile is the cysteine 327. The active site involves histidine 429.

It belongs to the CobB/CobQ family. CobQ subfamily.

It participates in cofactor biosynthesis; adenosylcobalamin biosynthesis. In terms of biological role, catalyzes amidations at positions B, D, E, and G on adenosylcobyrinic A,C-diamide. NH(2) groups are provided by glutamine, and one molecule of ATP is hydrogenolyzed for each amidation. This Paraburkholderia phymatum (strain DSM 17167 / CIP 108236 / LMG 21445 / STM815) (Burkholderia phymatum) protein is Cobyric acid synthase.